An 804-amino-acid polypeptide reads, in one-letter code: Phenylalanine--tRNA ligase beta subunit (804 aa).

Positions 40-155 constitute a tRNA-binding domain; sequence GEGIKGVVIG…NDAETGSDAL (116 aa). A B5 domain is found at 409–484; sequence IEANNIHVSA…RLYGYDNIPS (76 aa). Mg(2+) contacts are provided by Asp462, Asp468, Glu471, and Glu472. In terms of domain architecture, FDX-ACB spans 710-803; the sequence is PKYPSVTRDI…LEDTYQAVLR (94 aa).

Belongs to the phenylalanyl-tRNA synthetase beta subunit family. Type 1 subfamily. Tetramer of two alpha and two beta subunits. Requires Mg(2+) as cofactor.

It localises to the cytoplasm. It catalyses the reaction tRNA(Phe) + L-phenylalanine + ATP = L-phenylalanyl-tRNA(Phe) + AMP + diphosphate + H(+). The chain is Phenylalanine--tRNA ligase beta subunit (pheT) from Bacillus subtilis (strain 168).